Reading from the N-terminus, the 2243-residue chain is Zinc finger FYVE domain-containing protein 26 homolog (2243 aa).

Disordered stretches follow at residues 386-416 (SQRKGEDGENDEEDDEQYVDDDVASPPRPTA) and 514-556 (KKKA…GKAS). Over residues 393–408 (GENDEEDDEQYVDDDV) the composition is skewed to acidic residues. Tyrosine 403 carries the phosphotyrosine modification. Basic and acidic residues predominate over residues 517-528 (ASSDDESRERSN). Residues 534 to 543 (NRRKARRQRR) are compositionally biased toward basic residues. Residues 617–644 (KKIIETFHLEHSQLNRELHFMEQQQLVK) form an LRR 1 repeat. Residue serine 1424 is modified to Phosphoserine. The FYVE-type zinc-finger motif lies at 1444-1500 (DEEASHCMCCRRAAFTMLMRRHHCRRCGRVVCYACSTHRIRIPELYDELEVRICNDC). Zn(2+)-binding residues include cysteine 1450, cysteine 1453, cysteine 1467, cysteine 1470, cysteine 1475, cysteine 1478, cysteine 1497, and cysteine 1500. The tract at residues 1505-1534 (TPAKDQGDGTSSERSAISGQVSKSSGRSDS) is disordered. Residues 1512–1534 (DGTSSERSAISGQVSKSSGRSDS) show a composition bias toward polar residues. One copy of the LRR 2 repeat lies at 1887–1912 (YPQLANGGLNVLMDELQQLDDAQFTA).

Belongs to the ZFYVE26 family.

Its function is as follows. Phosphatidylinositol 3-phosphate (PtdIns[3]P)-binding protein. Involved in autophagy. The protein is Zinc finger FYVE domain-containing protein 26 homolog of Drosophila melanogaster (Fruit fly).